The chain runs to 176 residues: Translation initiation factor IF-3 (176 aa).

Belongs to the IF-3 family. In terms of assembly, monomer.

Its subcellular location is the cytoplasm. In terms of biological role, IF-3 binds to the 30S ribosomal subunit and shifts the equilibrium between 70S ribosomes and their 50S and 30S subunits in favor of the free subunits, thus enhancing the availability of 30S subunits on which protein synthesis initiation begins. In Nitratidesulfovibrio vulgaris (strain ATCC 29579 / DSM 644 / CCUG 34227 / NCIMB 8303 / VKM B-1760 / Hildenborough) (Desulfovibrio vulgaris), this protein is Translation initiation factor IF-3.